A 166-amino-acid chain; its full sequence is Peptidyl-prolyl cis-trans isomerase cyp18 (166 aa).

The region spanning 2–164 (STVELNTSAG…QPVVIESAKI (163 aa)) is the PPIase cyclophilin-type domain.

The protein belongs to the cyclophilin-type PPIase family. In terms of assembly, monomer.

Its subcellular location is the cytoplasm. The catalysed reaction is [protein]-peptidylproline (omega=180) = [protein]-peptidylproline (omega=0). Its activity is regulated as follows. Inhibition by cyclosporin A with a Ki of 21 mu-mol. Its function is as follows. PPIases accelerate the folding of proteins. It catalyzes the cis-trans isomerization of proline imidic peptide bonds in oligopeptides. This is Peptidyl-prolyl cis-trans isomerase cyp18 from Streptomyces antibioticus.